Consider the following 194-residue polypeptide: Fe/S biogenesis protein NfuA (194 aa).

The [4Fe-4S] cluster site is built by Cys-152 and Cys-155.

Belongs to the NfuA family. In terms of assembly, homodimer. Requires [4Fe-4S] cluster as cofactor.

In terms of biological role, involved in iron-sulfur cluster biogenesis. Binds a 4Fe-4S cluster, can transfer this cluster to apoproteins, and thereby intervenes in the maturation of Fe/S proteins. Could also act as a scaffold/chaperone for damaged Fe/S proteins. The sequence is that of Fe/S biogenesis protein NfuA from Pseudomonas fluorescens (strain SBW25).